Here is a 258-residue protein sequence, read N- to C-terminus: Synapse differentiation-inducing gene protein 1-like (258 aa).

At 1-182 (MESLSELQNP…FIVIPPRDHL (182 aa)) the chain is on the extracellular side. Residues 183 to 203 (GLAIFSMLCCFWPLGIAAFYF) traverse the membrane as a helical segment. Residues 204-228 (SQGTSKAVTKGDFPLASIASRRALF) lie on the Cytoplasmic side of the membrane. A helical transmembrane segment spans residues 229–249 (LAALSITIGTGVYVGVVVALI). Residues 250–258 (AYLSKPGHI) are Extracellular-facing.

This sequence belongs to the CD225/Dispanin family.

Its subcellular location is the membrane. It is found in the golgi apparatus. It localises to the cis-Golgi network. This Danio rerio (Zebrafish) protein is Synapse differentiation-inducing gene protein 1-like (syndig1l).